The sequence spans 860 residues: Linoleate 9S-lipoxygenase A (860 aa).

The 131-residue stretch at 29–159 (NALDFTDLAG…RYKSDRIFFA (131 aa)) folds into the PLAT domain. One can recognise a Lipoxygenase domain in the interval 162-860 (PYLPSETPEL…GKGIPNSVSI (699 aa)). Positions 209-246 (PDQGKENVRTTLGGSADYPYPRRGRTGRPPTRTDPKSE) are disordered. Positions 521, 526, 712, 716, and 860 each coordinate Fe cation.

It belongs to the lipoxygenase family. Monomer. It depends on Fe cation as a cofactor. Expressed in germinating seeds as well as in ripening fruit.

The protein resides in the cytoplasm. It carries out the reaction (9Z,12Z)-octadecadienoate + O2 = (9S)-hydroperoxy-(10E,12Z)-octadecadienoate. Its pathway is lipid metabolism; oxylipin biosynthesis. Functionally, plant lipoxygenase may be involved in a number of diverse aspects of plant physiology including growth and development, pest resistance, and senescence or responses to wounding. It catalyzes the hydroperoxidation of lipids containing a cis,cis-1,4-pentadiene structure. This chain is Linoleate 9S-lipoxygenase A (LOX1.1), found in Solanum lycopersicum (Tomato).